We begin with the raw amino-acid sequence, 93 residues long: Putative regulatory protein LBL_1834 (93 aa).

Belongs to the RemA family.

This is Putative regulatory protein LBL_1834 from Leptospira borgpetersenii serovar Hardjo-bovis (strain L550).